Consider the following 298-residue polypeptide: Glycine--tRNA ligase alpha subunit (298 aa).

Belongs to the class-II aminoacyl-tRNA synthetase family. In terms of assembly, tetramer of two alpha and two beta subunits.

Its subcellular location is the cytoplasm. It carries out the reaction tRNA(Gly) + glycine + ATP = glycyl-tRNA(Gly) + AMP + diphosphate. The chain is Glycine--tRNA ligase alpha subunit (glyQ) from Helicobacter pylori (strain J99 / ATCC 700824) (Campylobacter pylori J99).